We begin with the raw amino-acid sequence, 111 residues long: Ig kappa chain V-III region PC 7175 (111 aa).

Positions 1–23 are framework-1; it reads DIVLTQSPASLAVSLGQRATISC. Cysteines 23 and 92 form a disulfide. The tract at residues 24–38 is complementarity-determining-1; that stretch reads RASKSVSTSGYSYMH. The interval 39–53 is framework-2; sequence WYQQKPGQPPKLLIY. Residues 54-60 form a complementarity-determining-2 region; that stretch reads LASNLES. A framework-3 region spans residues 61–92; sequence GVPARFSGSGSGTDFTLNIHPVEEEDAATYYC. The complementarity-determining-3 stretch occupies residues 93 to 101; it reads QHSRELPLT. The segment at 102-111 is framework-4; the sequence is FGAGTKLELK.

The chain is Ig kappa chain V-III region PC 7175 from Mus musculus (Mouse).